We begin with the raw amino-acid sequence, 282 residues long: 3-methyl-2-oxobutanoate hydroxymethyltransferase (282 aa).

2 residues coordinate Mg(2+): Asp-46 and Asp-85. Residues 46 to 47 (DS), Asp-85, and Lys-115 each bind 3-methyl-2-oxobutanoate. Position 117 (Glu-117) interacts with Mg(2+). The active-site Proton acceptor is the Glu-184.

It belongs to the PanB family. As to quaternary structure, homodecamer; pentamer of dimers. The cofactor is Mg(2+).

Its subcellular location is the cytoplasm. The enzyme catalyses 3-methyl-2-oxobutanoate + (6R)-5,10-methylene-5,6,7,8-tetrahydrofolate + H2O = 2-dehydropantoate + (6S)-5,6,7,8-tetrahydrofolate. Its pathway is cofactor biosynthesis; (R)-pantothenate biosynthesis; (R)-pantoate from 3-methyl-2-oxobutanoate: step 1/2. Its function is as follows. Catalyzes the reversible reaction in which hydroxymethyl group from 5,10-methylenetetrahydrofolate is transferred onto alpha-ketoisovalerate to form ketopantoate. In Alkaliphilus metalliredigens (strain QYMF), this protein is 3-methyl-2-oxobutanoate hydroxymethyltransferase.